We begin with the raw amino-acid sequence, 444 residues long: Exodeoxyribonuclease 7 large subunit (444 aa).

It belongs to the XseA family. In terms of assembly, heterooligomer composed of large and small subunits.

The protein resides in the cytoplasm. The catalysed reaction is Exonucleolytic cleavage in either 5'- to 3'- or 3'- to 5'-direction to yield nucleoside 5'-phosphates.. In terms of biological role, bidirectionally degrades single-stranded DNA into large acid-insoluble oligonucleotides, which are then degraded further into small acid-soluble oligonucleotides. The chain is Exodeoxyribonuclease 7 large subunit from Rickettsia canadensis (strain McKiel).